Here is a 940-residue protein sequence, read N- to C-terminus: MSDYKFTLNLPETEFPMRGNLANREPEMLERWTKDGLYQQIRDSRIGRTPFILHDGPPYANGSIHIGHSVNKILKDIIVKSKTMSGFDAPYVPGWDCHGLPIELKVEQKVGKPGQKITAAEFREECRKYAAEQVNGQREDFIRLGVLGDWQNPYLTMDFSTEANIVRSLSKVIESGHLHKGVKPVHWCTDCGSALAEAEVEYEDKTSPAIDVAFVAADSKAVAAKFGVSDYSHPVSMVIWTTTPWTLPANRALSLSPELDYSLVEFEKDGVTQALILAEVLVESCLTRYNVESHTVLGTTKGAALELVCFNHPFLDFDVPAILGDHVTTDAGTGIVHTAPGHGQDDFVVGQKYGLEVANPVGDNGVYKPDTKYFAGQHVFKANDNVVALLREKGALLNHVAYRHSYPHCWRHKTPIIFRATPQWFISMDNHGLRTQALKEIEQTQWIPDWGQSRIEKMVENRPDWCISRQRTWGVPITLFVNRETEELHPDSVSLMERVANRIEQQGIQAWWDLDAAELLGDEADQYRKVTDTLDVWYDSGSTFSSVVAARPEFHGHGVDLYLEGSDQHRGWFMSSLMISTAMNGKAPYKQVLTHGFTVDGKGRKMSKSIGNVIAPQTVTNKLGADILRLWVAATDYSGEMTVSDEILNRSADAYRRIRNTARFLLANLNGFDPAKDLVAVEDMVALDRWVVRRAAALQQEIIEAYDQYNFHIVTQKLMQFCSVELGSFYLDIIKDRQYTAKQEGHARRSCQSALFHIAEAMVRWIAPVLSFTADEVWQLLPGERDAYVFTQEWYQGLKSVTLATDLSDDYWQQLLAVRNEVNKVIEQARRDKRIGGSLEAEVTLFADATLTEQLTHIGDELRFVLLTSEAKVLPLADATTEAVETELASLKLVVASSTAEKCERCWHHREEVGSIEAHPTLCTRCVTNIEGDGEVRQFA.

The short motif at 58 to 68 is the 'HIGH' region element; sequence PYANGSIHIGH. L-isoleucyl-5'-AMP is bound at residue glutamate 564. The short motif at 605-609 is the 'KMSKS' region element; it reads KMSKS. Lysine 608 provides a ligand contact to ATP. The Zn(2+) site is built by cysteine 903, cysteine 906, cysteine 923, and cysteine 926.

Belongs to the class-I aminoacyl-tRNA synthetase family. IleS type 1 subfamily. In terms of assembly, monomer. Zn(2+) is required as a cofactor.

The protein localises to the cytoplasm. The enzyme catalyses tRNA(Ile) + L-isoleucine + ATP = L-isoleucyl-tRNA(Ile) + AMP + diphosphate. In terms of biological role, catalyzes the attachment of isoleucine to tRNA(Ile). As IleRS can inadvertently accommodate and process structurally similar amino acids such as valine, to avoid such errors it has two additional distinct tRNA(Ile)-dependent editing activities. One activity is designated as 'pretransfer' editing and involves the hydrolysis of activated Val-AMP. The other activity is designated 'posttransfer' editing and involves deacylation of mischarged Val-tRNA(Ile). This chain is Isoleucine--tRNA ligase, found in Shewanella sp. (strain W3-18-1).